The sequence spans 241 residues: Phosphoribosylaminoimidazole-succinocarboxamide synthase (241 aa).

It belongs to the SAICAR synthetase family.

It carries out the reaction 5-amino-1-(5-phospho-D-ribosyl)imidazole-4-carboxylate + L-aspartate + ATP = (2S)-2-[5-amino-1-(5-phospho-beta-D-ribosyl)imidazole-4-carboxamido]succinate + ADP + phosphate + 2 H(+). It functions in the pathway purine metabolism; IMP biosynthesis via de novo pathway; 5-amino-1-(5-phospho-D-ribosyl)imidazole-4-carboxamide from 5-amino-1-(5-phospho-D-ribosyl)imidazole-4-carboxylate: step 1/2. This chain is Phosphoribosylaminoimidazole-succinocarboxamide synthase, found in Oenococcus oeni (strain ATCC BAA-331 / PSU-1).